We begin with the raw amino-acid sequence, 514 residues long: Probable type III restriction-modification enzyme HindVIP Res subunit (514 aa).

It belongs to the type III restriction-modification system Res protein family. As to quaternary structure, contains two different subunits: Res and Mod. Requires Mg(2+) as cofactor. S-adenosyl-L-methionine is required as a cofactor.

The enzyme catalyses Endonucleolytic cleavage of DNA to give specific double-stranded fragments with terminal 5'-phosphates.. In terms of biological role, a type III restriction enzyme that recognizes 2 inversely oriented double-stranded sequences 5'-CGAAT-3' and cleaves 25-27 base pairs downstream. After binding to one recognition site undergoes random one-dimensional diffusion along DNA until it collides with a stationary enzyme bound to the second DNA site, which is when DNA cleavage occurs. DNA restriction requires both the Res and Mod subunits. The protein is Probable type III restriction-modification enzyme HindVIP Res subunit of Haemophilus influenzae (strain ATCC 51907 / DSM 11121 / KW20 / Rd).